The sequence spans 285 residues: Heterogeneous nuclear ribonucleoprotein A/B (285 aa).

Residues 1-65 (MSDAAEEQPM…NQNGAEGDQI (65 aa)) are disordered. Low complexity predominate over residues 25 to 43 (EGEAPVEPSAAAAAPAASA). RRM domains are found at residues 75 to 158 (GKMF…KDPV) and 159 to 238 (KKIF…QPKE). Position 87 is a phosphoserine (Ser87). Residues Lys136 and Lys208 each participate in a glycyl lysine isopeptide (Lys-Gly) (interchain with G-Cter in SUMO2) cross-link. At Lys220 the chain carries N6-acetyllysine. The interval 239–285 (VYQQQQYGSGGRGNRNRGNRGSGGGQGSTNYGKSQRRGGHQNNYKPY) is disordered. Phosphoserine is present on Ser247. The residue at position 250 (Arg250) is a Dimethylated arginine; alternate. Omega-N-methylarginine; alternate is present on Arg250. Residues Arg255 and Arg258 each carry the omega-N-methylarginine modification. The residue at position 271 (Lys271) is an N6-acetyllysine. At Arg275 the chain carries Dimethylated arginine; alternate. The residue at position 275 (Arg275) is an Omega-N-methylarginine; alternate. The residue at position 275 (Arg275) is an Asymmetric dimethylarginine; alternate.

Identified in a IGF2BP1-dependent mRNP granule complex containing untranslated mRNAs. Interacts with APOBEC1. As to expression, ubiquitous.

Its subcellular location is the nucleus. It localises to the cytoplasm. In terms of biological role, transcriptional repressor. Binds to CArG box motifs, single-stranded and double-stranded DNA, and RNA. It may be that repression by CBF-A is a result of competitive binding of CBF, a putative positive factor, and CBF-A to the same or overlapping motifs around the CArG boxes. This Mus musculus (Mouse) protein is Heterogeneous nuclear ribonucleoprotein A/B (Hnrnpab).